The primary structure comprises 596 residues: Probable lysosomal cobalamin transporter (596 aa).

A run of 10 helical transmembrane segments spans residues 7–27 (AFIW…AAIF), 46–66 (IITL…IALV), 95–115 (IVYY…IPFT), 145–165 (TLFF…APVA), 196–216 (LLIS…LALL), 313–333 (LVGG…MLIT), 350–370 (ILGS…SSIV), 376–396 (VLMA…IAVI), 420–440 (MATV…AMII), and 507–527 (FFGA…LIVF). Residues 566–596 (WQDIRGKAKNQTPSRGAAGRGIRGDDDHDDD) are disordered. Positions 587–596 (IRGDDDHDDD) are enriched in basic and acidic residues.

The protein belongs to the LIMR family. LMBRD1 subfamily.

It is found in the lysosome membrane. In terms of biological role, probable lysosomal cobalamin transporter. Required to export cobalamin from lysosomes allowing its conversion to cofactors. The polypeptide is Probable lysosomal cobalamin transporter (Sclerotinia sclerotiorum (strain ATCC 18683 / 1980 / Ss-1) (White mold)).